The following is a 92-amino-acid chain: C-C motif chemokine 4 (92 aa).

Positions 1 to 23 (MKLGVTVLSVALLVAALCPPALS) are cleaved as a signal peptide. 2 disulfide bridges follow: cysteine 34/cysteine 58 and cysteine 35/cysteine 74.

Belongs to the intercrine beta (chemokine CC) family. As to quaternary structure, homodimer.

It is found in the secreted. In terms of biological role, monokine with inflammatory and chemokinetic properties. The polypeptide is C-C motif chemokine 4 (CCL4) (Oryctolagus cuniculus (Rabbit)).